The following is a 171-amino-acid chain: CASP-like protein 1C3 (171 aa).

Over 1-6 the chain is Cytoplasmic; that stretch reads MVKPKR. A helical membrane pass occupies residues 7 to 27; that stretch reads LLSLLLRLIAFGATLAAVIIM. The Extracellular segment spans residues 28–52; the sequence is ATSHEKGSFFALSYEAKYSDTPAFK. The helical transmembrane segment at 53–73 threads the bilayer; that stretch reads YFVIANAIVTVYGFLALFIPS. The Cytoplasmic segment spans residues 74–79; that stretch reads ESPLWR. The chain crosses the membrane as a helical span at residues 80–100; it reads LVLALDLVFTMLLISSISAAL. Residues 101-130 lie on the Extracellular side of the membrane; that stretch reads AVAQVGKKGNSSAGWLPVCGQVTKYCNQVT. Asparagine 110 carries N-linked (GlcNAc...) asparagine glycosylation. The helical transmembrane segment at 131 to 151 threads the bilayer; the sequence is GALVAGFIAIITYIILLLYSI. At 152–171 the chain is on the cytoplasmic side; it reads YTFLNSLLGKTPCRLSSPGI.

This sequence belongs to the Casparian strip membrane proteins (CASP) family. As to quaternary structure, homodimer and heterodimers.

It is found in the cell membrane. The protein is CASP-like protein 1C3 of Populus trichocarpa (Western balsam poplar).